Reading from the N-terminus, the 430-residue chain is Tol-Pal system protein TolB (430 aa).

A signal peptide spans 1-21 (MKQAFRVALGFLVLWASVLHA).

Belongs to the TolB family. As to quaternary structure, the Tol-Pal system is composed of five core proteins: the inner membrane proteins TolA, TolQ and TolR, the periplasmic protein TolB and the outer membrane protein Pal. They form a network linking the inner and outer membranes and the peptidoglycan layer.

The protein localises to the periplasm. Functionally, part of the Tol-Pal system, which plays a role in outer membrane invagination during cell division and is important for maintaining outer membrane integrity. TolB occupies a key intermediary position in the Tol-Pal system because it communicates directly with both membrane-embedded components, Pal in the outer membrane and TolA in the inner membrane. This is Tol-Pal system protein TolB from Yersinia enterocolitica serotype O:8 / biotype 1B (strain NCTC 13174 / 8081).